The following is a 1000-amino-acid chain: Vacuolar protein-sorting protein bro1 (1000 aa).

A BRO1 domain is found at 5–406; sequence PMISCPLKQT…EKVETADGEM (402 aa). Positions 732–793 form a coiled coil; the sequence is YAEMTETVDS…RQLMERLSTE (62 aa). Disordered stretches follow at residues 760 to 857 and 891 to 1000; these read LLGQ…PYSQ and PIPA…NAWK. Basic and acidic residues predominate over residues 764 to 792; it reads IEREKAAGTSDHEEREREKLRQLMERLST. Polar residues predominate over residues 840–849; that stretch reads VPQQHGTPVS. Composition is skewed to pro residues over residues 898 to 922 and 931 to 954; these read SPPPSQPFYSPTPTPFYTSPTPPVP and YVPPPPPPRPQQPTYPPSTGPFPS. The segment covering 981–991 has biased composition (polar residues); it reads TGPSVSANSSD.

The protein belongs to the BRO1 family.

It is found in the cytoplasm. The protein resides in the endosome. Functionally, involved in concentration and sorting of cargo proteins of the multivesicular body (MVB) for incorporation into intralumenal vesicles. In Emericella nidulans (strain FGSC A4 / ATCC 38163 / CBS 112.46 / NRRL 194 / M139) (Aspergillus nidulans), this protein is Vacuolar protein-sorting protein bro1 (broA).